A 252-amino-acid polypeptide reads, in one-letter code: Imidazole glycerol phosphate synthase subunit HisF (252 aa).

Residues D11 and D130 contribute to the active site.

This sequence belongs to the HisA/HisF family. As to quaternary structure, heterodimer of HisH and HisF.

The protein resides in the cytoplasm. The catalysed reaction is 5-[(5-phospho-1-deoxy-D-ribulos-1-ylimino)methylamino]-1-(5-phospho-beta-D-ribosyl)imidazole-4-carboxamide + L-glutamine = D-erythro-1-(imidazol-4-yl)glycerol 3-phosphate + 5-amino-1-(5-phospho-beta-D-ribosyl)imidazole-4-carboxamide + L-glutamate + H(+). Its pathway is amino-acid biosynthesis; L-histidine biosynthesis; L-histidine from 5-phospho-alpha-D-ribose 1-diphosphate: step 5/9. IGPS catalyzes the conversion of PRFAR and glutamine to IGP, AICAR and glutamate. The HisF subunit catalyzes the cyclization activity that produces IGP and AICAR from PRFAR using the ammonia provided by the HisH subunit. This Staphylococcus aureus (strain MRSA252) protein is Imidazole glycerol phosphate synthase subunit HisF.